The following is a 103-amino-acid chain: Thioredoxin-1 (103 aa).

Residues 2-103 enclose the Thioredoxin domain; sequence VKQVSDSSEF…KLEASIKANL (102 aa). Catalysis depends on nucleophile residues C30 and C33. C30 and C33 are oxidised to a cystine.

This sequence belongs to the thioredoxin family.

Functionally, participates in various redox reactions through the reversible oxidation of its active center dithiol to a disulfide and catalyzes dithiol-disulfide exchange reactions. The sequence is that of Thioredoxin-1 (trx1) from Schizosaccharomyces pombe (strain 972 / ATCC 24843) (Fission yeast).